The primary structure comprises 276 residues: Large ribosomal subunit protein uL2 (276 aa).

Residues 223 to 276 (AVMNPVDHPHGGGEGKNSVGRKSPLTPWGKPALGIKTRGRKTSDKFIVRRRNEK) form a disordered region. Basic and acidic residues predominate over residues 263 to 276 (KTSDKFIVRRRNEK).

This sequence belongs to the universal ribosomal protein uL2 family. Part of the 50S ribosomal subunit. Forms a bridge to the 30S subunit in the 70S ribosome.

Its function is as follows. One of the primary rRNA binding proteins. Required for association of the 30S and 50S subunits to form the 70S ribosome, for tRNA binding and peptide bond formation. It has been suggested to have peptidyltransferase activity; this is somewhat controversial. Makes several contacts with the 16S rRNA in the 70S ribosome. This chain is Large ribosomal subunit protein uL2, found in Fusobacterium nucleatum subsp. nucleatum (strain ATCC 25586 / DSM 15643 / BCRC 10681 / CIP 101130 / JCM 8532 / KCTC 2640 / LMG 13131 / VPI 4355).